Here is a 326-residue protein sequence, read N- to C-terminus: N-acetyl-gamma-glutamyl-phosphate reductase (326 aa).

Cys-155 is an active-site residue.

The protein belongs to the NAGSA dehydrogenase family. Type 1 subfamily.

The protein localises to the cytoplasm. The enzyme catalyses N-acetyl-L-glutamate 5-semialdehyde + phosphate + NADP(+) = N-acetyl-L-glutamyl 5-phosphate + NADPH + H(+). Its pathway is amino-acid biosynthesis; L-arginine biosynthesis; N(2)-acetyl-L-ornithine from L-glutamate: step 3/4. Catalyzes the NADPH-dependent reduction of N-acetyl-5-glutamyl phosphate to yield N-acetyl-L-glutamate 5-semialdehyde. The protein is N-acetyl-gamma-glutamyl-phosphate reductase of Shewanella baltica (strain OS155 / ATCC BAA-1091).